An 84-amino-acid chain; its full sequence is Turripeptide IX-01 (84 aa).

The first 21 residues, 1–21 (MGFYMLLTVALLLTSFMSVEA), serve as a signal peptide directing secretion. Positions 22 to 39 (TPVDQAERSAMKESGLAH) are excised as a propeptide. Cystine bridges form between C48–C70, C55–C74, and C60–C81.

In terms of tissue distribution, expressed by the venom duct.

It localises to the secreted. In Gemmula speciosa (Splendid gem-turris), this protein is Turripeptide IX-01.